A 242-amino-acid chain; its full sequence is MGRGRVQLKRIENKINRQVTFSKRRSGLLKKAHEISVLCDAEVALIVFSSKGKLFEYSTDSCMERILERYDRYLYSDKQLVGRDVSQSENWVLEHAKLKARVEVLEKNKRNFMGEDLDSLSLKELQSLEHQLDAAIKSIRSRKNQAMFESISALQKKDKALQDHNNSLLKKIKEREKKTGQQEGQLVQCSNSSSVLLPQYCVTSSRDGFVERVGGENGGASSLTEPNSLLPAWMLRPTTTNE.

In terms of domain architecture, MADS-box spans 3-57 (RGRVQLKRIENKINRQVTFSKRRSGLLKKAHEISVLCDAEVALIVFSSKGKLFEY). The K-box domain maps to 88 to 178 (SENWVLEHAK…LKKIKEREKK (91 aa)). Residues 89–178 (ENWVLEHAKL…LKKIKEREKK (90 aa)) adopt a coiled-coil conformation.

In terms of assembly, homodimer capable of binding to CArG-box sequences. Vascular tissue of cauline leaves, floral shoot apex and valves of carpels and fruits.

Its subcellular location is the nucleus. Its function is as follows. Probable transcription factor that promotes early floral meristem identity in synergy with APETALA1 and CAULIFLOWER. Is required subsequently for the transition of an inflorescence meristem into a floral meristem. Seems to be partially redundant to the function of APETALA1 and CAULIFLOWER in the up-regulation of LEAFY. Is also required for normal pattern of cell division, expansion and differentiation during morphogenesis of the silique. Probably not required for fruit elongation but instead is required to prevent ectopic activity of IND. Represses SAUR10 expression in stems and inflorescence branches. In Arabidopsis thaliana (Mouse-ear cress), this protein is Agamous-like MADS-box protein AGL8 (AGL8).